The following is a 158-amino-acid chain: Cyclic pyranopterin monophosphate synthase (158 aa).

Residues 75 to 77 (LCH) and 113 to 114 (ME) contribute to the substrate site. Asp128 is an active-site residue.

Belongs to the MoaC family. As to quaternary structure, homohexamer; trimer of dimers.

The enzyme catalyses (8S)-3',8-cyclo-7,8-dihydroguanosine 5'-triphosphate = cyclic pyranopterin phosphate + diphosphate. It participates in cofactor biosynthesis; molybdopterin biosynthesis. Functionally, catalyzes the conversion of (8S)-3',8-cyclo-7,8-dihydroguanosine 5'-triphosphate to cyclic pyranopterin monophosphate (cPMP). The protein is Cyclic pyranopterin monophosphate synthase of Roseiflexus sp. (strain RS-1).